The following is a 232-amino-acid chain: Putative quercetin 2,3-dioxygenase PA1210 (232 aa).

Residues histidine 57, histidine 59, histidine 101, and glutamate 103 each coordinate a divalent metal cation.

Belongs to the pirin family. Requires a divalent metal cation as cofactor.

The catalysed reaction is quercetin + O2 = 2-(3,4-dihydroxybenzoyloxy)-4,6-dihydroxybenzoate + CO. It participates in flavonoid metabolism; quercetin degradation. Putative quercetin 2,3-dioxygenase. The sequence is that of Putative quercetin 2,3-dioxygenase PA1210 from Pseudomonas aeruginosa (strain ATCC 15692 / DSM 22644 / CIP 104116 / JCM 14847 / LMG 12228 / 1C / PRS 101 / PAO1).